Reading from the N-terminus, the 1711-residue chain is Nuclear pore complex protein Nup214 (1711 aa).

8 consecutive repeat copies span residues 472–473 (FG), 486–487 (FG), 497–498 (FG), 511–512 (FG), 514–515 (FG), 535–536 (FG), 588–589 (TS), and 598–599 (SL). Residues 472–1703 (FGAAAAKAPA…NSNAQKPAFG (1232 aa)) form a 45 X 2 AA repeats of F-G region. Leucine-zipper stretches follow at residues 650-672 (LDDL…VQGL) and 767-788 (LTRL…KSKL). The disordered stretch occupies residues 886–905 (KPATANKYTQAAVAPPSPPD). The stretch at 1009 to 1010 (FG) is repeat 9. Positions 1012–1081 (GSPAVAAPTP…NKSFGFGGFT (70 aa)) are disordered. Composition is skewed to basic and acidic residues over residues 1037–1051 (TKPK…KEFK) and 1058–1072 (EESK…ETEN). Residues 1044–1711 (AAESKEFKAV…FGGSSFMNYR (668 aa)) form an interaction with emb region. A run of 8 repeats spans residues 1075 to 1076 (FG), 1077 to 1078 (FG), 1097 to 1098 (FG), 1106 to 1107 (FG), 1135 to 1136 (FG), 1218 to 1219 (FG), 1229 to 1230 (FG), and 1240 to 1241 (FG). Over residues 1251-1261 (TSVTEANNKTD) the composition is skewed to polar residues. The disordered stretch occupies residues 1251-1270 (TSVTEANNKTDPISTTPSAI). Repeat copies occupy residues 1356–1357 (FG), 1388–1389 (FG), 1399–1400 (FG), 1434–1435 (FG), 1449–1450 (FG), 1458–1459 (FG), 1472–1473 (FG), 1481–1482 (FG), 1487–1488 (FG), 1507–1508 (FG), 1512–1513 (FG), 1539–1540 (FG), 1547–1548 (FG), 1562–1563 (FG), 1571–1572 (FG), 1584–1585 (FG), 1588–1589 (FG), 1601–1602 (FG), 1617–1618 (FG), 1623–1624 (FG), 1629–1630 (FG), 1635–1636 (FG), 1641–1642 (FG), 1647–1648 (FG), 1650–1651 (FG), 1662–1663 (FG), and 1686–1687 (FG). 2 disordered regions span residues 1533-1552 (SPQA…SPAT) and 1557-1614 (SGGS…TTTP). Gly residues-rich tracts occupy residues 1560–1572 (SIFG…GGFG) and 1582–1595 (GGFG…GGGS). The segment covering 1596-1614 (VAQTGFGSPQAPQQQTTTP) has biased composition (low complexity). Over residues 1688–1698 (NLAQTGNSNAQ) the composition is skewed to polar residues. The interval 1688-1711 (NLAQTGNSNAQKPAFGGSSFMNYR) is disordered. Repeat 45 spans residues 1702 to 1703 (FG).

In terms of assembly, component of the nuclear pore complex. Interacts with mbo/Nup88 and (via C-terminus) with emb to attenuate emb-mediated protein export.

It is found in the nucleus. Its subcellular location is the nuclear pore complex. The protein resides in the nucleus membrane. Its function is as follows. Part of the nuclear pore complex. Serves as a docking site in the receptor-mediated import of substrates across the nuclear pore complex including emb, RanGAP and phosphorylated Mad. Protects mbo/Nup88 from proteasomal degradation at the nuclear pore. Together with mbo/Nup88, sequesters emb in the cytoplasm and thereby attenuates nuclear export signal (NES)-mediated nuclear export. Together with mbo/Nup88, required for the nuclear import of the Rel family transcription factors dorsal (dl) and Dorsal-related immunity factor (Dif) and the activation of an immune response. The chain is Nuclear pore complex protein Nup214 from Drosophila melanogaster (Fruit fly).